The chain runs to 239 residues: Ribosomal RNA small subunit methyltransferase G (239 aa).

S-adenosyl-L-methionine-binding positions include Gly-77, Phe-82, 128–129, and Arg-147; that span reads AE. The interval 216–239 is disordered; that stretch reads EKKKQTPKKYPRKPGTPNKSPIEG.

This sequence belongs to the methyltransferase superfamily. RNA methyltransferase RsmG family.

The protein localises to the cytoplasm. Specifically methylates the N7 position of guanine in position 535 of 16S rRNA. The protein is Ribosomal RNA small subunit methyltransferase G of Bacillus pumilus (strain SAFR-032).